The chain runs to 269 residues: 2-heptyl-3-hydroxy-4(1H)-quinolone dioxygenase (269 aa).

Substrate is bound at residue histidine 97. The Proton donor/acceptor role is filled by histidine 246.

Belongs to the AB hydrolase superfamily. As to quaternary structure, monomer.

It carries out the reaction 2-heptyl-3-hydroxy-4(1H)-quinolone + O2 = N-octanoylanthranilate + CO + H(+). Ring-cleaving dioxygenase involved in the degradation pathway of the Pseudomonas aeruginosa quorum sensing signal molecules HHQ (2-heptyl-4-quinolone) and PQS (2-heptyl-3-hydroxy-4(1H)-quinolone) to anthranilate. Catalyzes the cleavage of PQS to form N-octanoylanthranilate and carbon monoxide. Thus, leads to the inactivation of PQS that plays a central role in the regulation of virulence factor production by P.aeruginosa, thereby quenching the production of antimicrobials, which may contribute to the competitiveness of M.abscessus in presence of P.aeruginosa. In vitro, can also use other 2-alkyl-3-hydroxy-4(1H)-quinolone (AHQ) substrates with shorter alkyl substituents at C2, but with lower efficiency. This chain is 2-heptyl-3-hydroxy-4(1H)-quinolone dioxygenase, found in Mycobacteroides abscessus (strain ATCC 19977 / DSM 44196 / CCUG 20993 / CIP 104536 / JCM 13569 / NCTC 13031 / TMC 1543 / L948) (Mycobacterium abscessus).